The following is a 420-amino-acid chain: Glyceraldehyde-3-phosphate dehydrogenase GAPCP2, chloroplastic (420 aa).

A chloroplast-targeting transit peptide spans 1-66; sequence MALSSLLRSA…YNAKRVQPIK (66 aa). NAD(+)-binding positions include 94 to 95, aspartate 116, and arginine 162; that span reads RI. D-glyceraldehyde 3-phosphate-binding positions include 233–235, threonine 264, 293–294, and arginine 316; these read SCT and TG. The Nucleophile role is filled by cysteine 234. Position 398 (asparagine 398) interacts with NAD(+).

Belongs to the glyceraldehyde-3-phosphate dehydrogenase family. As to quaternary structure, homotetramer. In terms of tissue distribution, expressed in shoot and root vasculature, leaf veins and vascular tissue of flowers and siliques.

Its subcellular location is the plastid. The protein resides in the chloroplast stroma. The catalysed reaction is D-glyceraldehyde 3-phosphate + phosphate + NAD(+) = (2R)-3-phospho-glyceroyl phosphate + NADH + H(+). Its function is as follows. Involved in plastidial glycolytic pathway and plays a specific role in glycolytic energy production in non-green plastids and chloroplasts. Essential for breakdown of starch to form sucrose for export to non-photosynthetic tissues, and to generate primary metabolites for anabolic pathways such as fatty acid and amino acid synthesis. Plays an important role in plant development by providing substrates for the phosphorylated pathway of serine biosynthesis in roots. Plays a crucial role in pollen development. Functionally redundant with GAPCP1. The sequence is that of Glyceraldehyde-3-phosphate dehydrogenase GAPCP2, chloroplastic (GAPCP2) from Arabidopsis thaliana (Mouse-ear cress).